A 339-amino-acid polypeptide reads, in one-letter code: Enhancer of mRNA-decapping protein 1 (339 aa).

2 disordered regions span residues 1–240 (MMMH…PPRY) and 309–339 (FPVNAQPPAHVGSAPQGQKISFDDLLGSAKK). The span at 13–25 (SPGSENHSNPASR) shows a compositional bias: polar residues. 2 stretches are compositionally biased toward basic and acidic residues: residues 26–38 (EQSKPKKETERRL) and 91–100 (DNKEKNKKLL). Residues 111 to 131 (NFSFYSESNSNSNSNVSSNSN) are compositionally biased toward low complexity. Residues 163-173 (RPDKNGKKGPV) show a composition bias toward basic and acidic residues. Polar residues predominate over residues 196 to 212 (FQRTSPKQQANTINDEN). The span at 213 to 237 (SSPSSSASSVSMSSPRPVAGAVAAP) shows a compositional bias: low complexity.

The protein belongs to the EDC family.

The protein resides in the cytoplasm. Functionally, mRNA-binding protein which stimulates mRNA decapping. The chain is Enhancer of mRNA-decapping protein 1 (EDC1) from Scheffersomyces stipitis (strain ATCC 58785 / CBS 6054 / NBRC 10063 / NRRL Y-11545) (Yeast).